A 227-amino-acid chain; its full sequence is Lipoprotein-releasing system ATP-binding protein LolD (227 aa).

Residues 6-227 enclose the ABC transporter domain; the sequence is LEMRGITKSY…RLDAGQLSDV (222 aa). 43–50 lines the ATP pocket; the sequence is APSGAGKS.

This sequence belongs to the ABC transporter superfamily. Lipoprotein translocase (TC 3.A.1.125) family. As to quaternary structure, the complex is composed of two ATP-binding proteins (LolD) and two transmembrane proteins (LolC and LolE).

Its subcellular location is the cell inner membrane. Part of the ABC transporter complex LolCDE involved in the translocation of mature outer membrane-directed lipoproteins, from the inner membrane to the periplasmic chaperone, LolA. Responsible for the formation of the LolA-lipoprotein complex in an ATP-dependent manner. The sequence is that of Lipoprotein-releasing system ATP-binding protein LolD from Roseobacter denitrificans (strain ATCC 33942 / OCh 114) (Erythrobacter sp. (strain OCh 114)).